Consider the following 509-residue polypeptide: Cobyric acid synthase (509 aa).

The 198-residue stretch at 262 to 459 (EIKVGIIKLP…IHGIFENDSW (198 aa)) folds into the GATase cobBQ-type domain. Residue Cys343 is the Nucleophile of the active site. Residue His451 is part of the active site.

The protein belongs to the CobB/CobQ family. CobQ subfamily.

It functions in the pathway cofactor biosynthesis; adenosylcobalamin biosynthesis. In terms of biological role, catalyzes amidations at positions B, D, E, and G on adenosylcobyrinic A,C-diamide. NH(2) groups are provided by glutamine, and one molecule of ATP is hydrogenolyzed for each amidation. This is Cobyric acid synthase from Prochlorococcus marinus (strain MIT 9301).